A 248-amino-acid chain; its full sequence is ATP synthase subunit a, chloroplastic (248 aa).

The next 5 membrane-spanning stretches (helical) occupy residues 38-58, 96-116, 135-155, 200-220, and 221-241; these read QVLITSWIVIAVLLGSATIAV, VPFIGTMFLFIFVSNWSGALL, INTTVALALLTSVAYFYAGLA, LVVAVLVSPVPLVVPIPVMFL, and GLFTSGIQALIFATLAAAYIG.

This sequence belongs to the ATPase A chain family. In terms of assembly, F-type ATPases have 2 components, CF(1) - the catalytic core - and CF(0) - the membrane proton channel. CF(1) has five subunits: alpha(3), beta(3), gamma(1), delta(1), epsilon(1). CF(0) has four main subunits: a, b, b' and c.

It is found in the plastid. It localises to the chloroplast thylakoid membrane. Key component of the proton channel; it plays a direct role in the translocation of protons across the membrane. The sequence is that of ATP synthase subunit a, chloroplastic from Pinus koraiensis (Korean pine).